Here is a 393-residue protein sequence, read N- to C-terminus: Bifunctional enzyme IspD/IspF (393 aa).

Residues 1-234 (MTISQRTAAI…ARLAAQLGDI (234 aa)) form a 2-C-methyl-D-erythritol 4-phosphate cytidylyltransferase region. The 2-C-methyl-D-erythritol 2,4-cyclodiphosphate synthase stretch occupies residues 235–393 (RTGTGYDVHA…SATIRLPWSA (159 aa)). Residues Asp241 and His243 each contribute to the a divalent metal cation site. 4-CDP-2-C-methyl-D-erythritol 2-phosphate contacts are provided by residues 241–243 (DVH) and 267–268 (HS). His275 provides a ligand contact to a divalent metal cation. Residues 289–291 (DIG), 365–368 (TTSE), Phe372, and Arg375 contribute to the 4-CDP-2-C-methyl-D-erythritol 2-phosphate site.

The protein in the N-terminal section; belongs to the IspD/TarI cytidylyltransferase family. IspD subfamily. This sequence in the C-terminal section; belongs to the IspF family. A divalent metal cation is required as a cofactor.

It carries out the reaction 2-C-methyl-D-erythritol 4-phosphate + CTP + H(+) = 4-CDP-2-C-methyl-D-erythritol + diphosphate. The catalysed reaction is 4-CDP-2-C-methyl-D-erythritol 2-phosphate = 2-C-methyl-D-erythritol 2,4-cyclic diphosphate + CMP. It functions in the pathway isoprenoid biosynthesis; isopentenyl diphosphate biosynthesis via DXP pathway; isopentenyl diphosphate from 1-deoxy-D-xylulose 5-phosphate: step 2/6. It participates in isoprenoid biosynthesis; isopentenyl diphosphate biosynthesis via DXP pathway; isopentenyl diphosphate from 1-deoxy-D-xylulose 5-phosphate: step 4/6. Bifunctional enzyme that catalyzes the formation of 4-diphosphocytidyl-2-C-methyl-D-erythritol from CTP and 2-C-methyl-D-erythritol 4-phosphate (MEP) (IspD), and catalyzes the conversion of 4-diphosphocytidyl-2-C-methyl-D-erythritol 2-phosphate (CDP-ME2P) to 2-C-methyl-D-erythritol 2,4-cyclodiphosphate (ME-CPP) with a corresponding release of cytidine 5-monophosphate (CMP) (IspF). The polypeptide is Bifunctional enzyme IspD/IspF (Bradyrhizobium sp. (strain BTAi1 / ATCC BAA-1182)).